A 68-amino-acid polypeptide reads, in one-letter code: DNA-directed RNA polymerase subunit Rpo10 (68 aa).

The Zn(2+) site is built by Cys7, Cys10, Cys44, and Cys45.

This sequence belongs to the archaeal Rpo10/eukaryotic RPB10 RNA polymerase subunit family. In terms of assembly, part of the RNA polymerase complex. The cofactor is Zn(2+).

It localises to the cytoplasm. The catalysed reaction is RNA(n) + a ribonucleoside 5'-triphosphate = RNA(n+1) + diphosphate. In terms of biological role, DNA-dependent RNA polymerase (RNAP) catalyzes the transcription of DNA into RNA using the four ribonucleoside triphosphates as substrates. The polypeptide is DNA-directed RNA polymerase subunit Rpo10 (Methanococcus maripaludis (strain C7 / ATCC BAA-1331)).